The primary structure comprises 139 residues: Large ribosomal subunit protein uL22 (139 aa).

Residues M1 to R21 are disordered.

This sequence belongs to the universal ribosomal protein uL22 family. In terms of assembly, part of the 50S ribosomal subunit.

Its function is as follows. This protein binds specifically to 23S rRNA; its binding is stimulated by other ribosomal proteins, e.g. L4, L17, and L20. It is important during the early stages of 50S assembly. It makes multiple contacts with different domains of the 23S rRNA in the assembled 50S subunit and ribosome. Functionally, the globular domain of the protein is located near the polypeptide exit tunnel on the outside of the subunit, while an extended beta-hairpin is found that lines the wall of the exit tunnel in the center of the 70S ribosome. In Deinococcus deserti (strain DSM 17065 / CIP 109153 / LMG 22923 / VCD115), this protein is Large ribosomal subunit protein uL22.